The chain runs to 90 residues: Major mite allergen Der p 23 (90 aa).

The first 21 residues, 1–21 (MKFNIIIVFISLAILVHSSYA), serve as a signal peptide directing secretion. The segment at 22–42 (ANDNDDDPTTTVHPTTTEQPD) is disordered. Residues 30–39 (TTTVHPTTTE) show a composition bias toward low complexity. The 47-residue stretch at 44-90 (KFECPSRFGYFADPKDPHKFYICSNWEAVHKDCPGNTRWNEDEETCT) folds into the Chitin-binding type-2 domain. 2 cysteine pairs are disulfide-bonded: Cys-47–Cys-66 and Cys-76–Cys-89. The segment at 52–90 (GYFADPKDPHKFYICSNWEAVHKDCPGNTRWNEDEETCT) is important for IgE-binding.

In terms of assembly, monomer. In terms of tissue distribution, expressed in epithelial cells of the midgut.

It localises to the secreted. The protein localises to the endoplasmic reticulum. Its subcellular location is the cytoplasmic vesicle. In terms of biological role, does not bind chitin in vitro. The sequence is that of Major mite allergen Der p 23 from Dermatophagoides pteronyssinus (European house dust mite).